A 347-amino-acid chain; its full sequence is Histidinol-phosphate aminotransferase (347 aa).

K209 is modified (N6-(pyridoxal phosphate)lysine).

Belongs to the class-II pyridoxal-phosphate-dependent aminotransferase family. Histidinol-phosphate aminotransferase subfamily. In terms of assembly, homodimer. The cofactor is pyridoxal 5'-phosphate.

The catalysed reaction is L-histidinol phosphate + 2-oxoglutarate = 3-(imidazol-4-yl)-2-oxopropyl phosphate + L-glutamate. The protein operates within amino-acid biosynthesis; L-histidine biosynthesis; L-histidine from 5-phospho-alpha-D-ribose 1-diphosphate: step 7/9. This is Histidinol-phosphate aminotransferase from Geotalea daltonii (strain DSM 22248 / JCM 15807 / FRC-32) (Geobacter daltonii).